Consider the following 85-residue polypeptide: MNSLLMIIGCLVLIGTVWTKEGYLVNMKTGCKYGCYELGDNGYCDRKCKAESGNYGYCYTVGCWCEGLPNSKPTWPLPGKSCSGK.

The N-terminal stretch at 1-19 (MNSLLMIIGCLVLIGTVWT) is a signal peptide. The 64-residue stretch at 20 to 83 (KEGYLVNMKT…TWPLPGKSCS (64 aa)) folds into the LCN-type CS-alpha/beta domain. 4 cysteine pairs are disulfide-bonded: C31-C82, C35-C58, C44-C63, and C48-C65. S83 carries the serine amide modification.

It belongs to the long (4 C-C) scorpion toxin superfamily. Sodium channel inhibitor family. Beta subfamily. Expressed by the venom gland.

Its subcellular location is the secreted. Its function is as follows. Beta toxins bind voltage-independently at site-4 of sodium channels (Nav) and shift the voltage of activation toward more negative potentials thereby affecting sodium channel activation and promoting spontaneous and repetitive firing. The chain is Toxin Cll6 from Centruroides limpidus (Mexican scorpion).